The sequence spans 282 residues: Pantothenate synthetase (282 aa).

30–37 (MGALHRGH) lines the ATP pocket. His37 (proton donor) is an active-site residue. Gln61 contacts (R)-pantoate. A beta-alanine-binding site is contributed by Gln61. Residue 147–150 (GEKD) coordinates ATP. Gln153 provides a ligand contact to (R)-pantoate. An ATP-binding site is contributed by 184-187 (LSSR).

This sequence belongs to the pantothenate synthetase family. Homodimer.

The protein localises to the cytoplasm. It carries out the reaction (R)-pantoate + beta-alanine + ATP = (R)-pantothenate + AMP + diphosphate + H(+). It participates in cofactor biosynthesis; (R)-pantothenate biosynthesis; (R)-pantothenate from (R)-pantoate and beta-alanine: step 1/1. Catalyzes the condensation of pantoate with beta-alanine in an ATP-dependent reaction via a pantoyl-adenylate intermediate. This is Pantothenate synthetase from Rhizorhabdus wittichii (strain DSM 6014 / CCUG 31198 / JCM 15750 / NBRC 105917 / EY 4224 / RW1) (Sphingomonas wittichii).